A 332-amino-acid polypeptide reads, in one-letter code: MTTYPVPQNPLLLRVLRLMDAFSKSDDERDFYVDRVEGFILYIDLDKDQEDLDKVYQELEENADRYCLIPKLTFYEIKKIMETFVNEKIYDIDTKEKFLEIVQSKNAREQFLEFLYDHETEQEKWQQFYVERSRIRIIEWLRNNKFQFVFEEDLDFSKHVLEQLKVHLFDAKVSKELTQARQLLVNKSKVYYSNEALNPRPKRGRPPKQSAKVEAETTVSSDIYTKVPSAARRFLFLPEITSASSLTFSEKFDTEEEFLAHLRGGGRLEDQLNLAKFSERFDSLRELSAKLGYDGDGDASDFFGEEYDDDDDDDDDVKPKKAAKRGRKKARS.

Disordered stretches follow at residues 196-215 and 291-332; these read ALNP…KVEA and LGYD…KARS. The segment covering 295–316 has biased composition (acidic residues); the sequence is GDGDASDFFGEEYDDDDDDDDD. A compositionally biased stretch (basic residues) spans 320–332; it reads KKAAKRGRKKARS.

This sequence belongs to the UPF0158 family.

The protein is UPF0158 protein TC_0713 of Chlamydia muridarum (strain MoPn / Nigg).